A 291-amino-acid polypeptide reads, in one-letter code: Ribose-phosphate pyrophosphokinase (291 aa).

Residues 34–36 (DGE) and 93–94 (RQ) contribute to the ATP site. The Mg(2+) site is built by H127 and D165. K188 is a catalytic residue. Residues R190, D216, and 220-224 (STGGT) contribute to the D-ribose 5-phosphate site.

The protein belongs to the ribose-phosphate pyrophosphokinase family. Class III (archaeal) subfamily. Mg(2+) serves as cofactor.

The protein localises to the cytoplasm. The enzyme catalyses D-ribose 5-phosphate + ATP = 5-phospho-alpha-D-ribose 1-diphosphate + AMP + H(+). The protein operates within metabolic intermediate biosynthesis; 5-phospho-alpha-D-ribose 1-diphosphate biosynthesis; 5-phospho-alpha-D-ribose 1-diphosphate from D-ribose 5-phosphate (route I): step 1/1. In terms of biological role, involved in the biosynthesis of the central metabolite phospho-alpha-D-ribosyl-1-pyrophosphate (PRPP) via the transfer of pyrophosphoryl group from ATP to 1-hydroxyl of ribose-5-phosphate (Rib-5-P). This chain is Ribose-phosphate pyrophosphokinase, found in Sulfolobus acidocaldarius (strain ATCC 33909 / DSM 639 / JCM 8929 / NBRC 15157 / NCIMB 11770).